Consider the following 320-residue polypeptide: Ubiquitin-like domain-containing CTD phosphatase 1 (320 aa).

Residues 6–77 (VVVIVKWSGK…LKPNFKLMMV (72 aa)) enclose the Ubiquitin-like domain. Positions 136–296 (PREGKKLLVL…LKLSDYLRKI (161 aa)) constitute an FCP1 homology domain. The Mg(2+) site is built by D146, D148, and D255.

The cofactor is Mg(2+).

It localises to the nucleus. The catalysed reaction is O-phospho-L-seryl-[protein] + H2O = L-seryl-[protein] + phosphate. It catalyses the reaction O-phospho-L-threonyl-[protein] + H2O = L-threonyl-[protein] + phosphate. In terms of biological role, dephosphorylates 26S nuclear proteasomes, thereby decreasing their proteolytic activity. Recruited to the 19S regulatory particle of the 26S proteasome where it dephosphorylates 19S component Rpt1 which impairs Rpt1 ATPase activity and disrupts 26S proteasome assembly. This is Ubiquitin-like domain-containing CTD phosphatase 1 from Drosophila melanogaster (Fruit fly).